The primary structure comprises 552 residues: Ribulokinase (552 aa).

The protein belongs to the ribulokinase family.

It carries out the reaction D-ribulose + ATP = D-ribulose 5-phosphate + ADP + H(+). It catalyses the reaction L-ribulose + ATP = L-ribulose 5-phosphate + ADP + H(+). Its pathway is carbohydrate degradation; L-arabinose degradation via L-ribulose; D-xylulose 5-phosphate from L-arabinose (bacterial route): step 2/3. The polypeptide is Ribulokinase (Bacillus licheniformis (strain ATCC 14580 / DSM 13 / JCM 2505 / CCUG 7422 / NBRC 12200 / NCIMB 9375 / NCTC 10341 / NRRL NRS-1264 / Gibson 46)).